The sequence spans 169 residues: MDRVDAPAEQMTPATDAAADSHQVPQSIDILKIMQSIPHRYPFLLIDKMVEIHAGQSAIGIKNVTVNEPFFQGHFPSHPVMPGVLIVEAMAQTAATLVVMTLGKAFEGKLVYFMTIENAKFRRPVGPGDQLRIHVDKERSRANVWKFKGVARVDDVAVAEATFSAMIMG.

Histidine 74 is an active-site residue.

It belongs to the thioester dehydratase family. FabZ subfamily.

It is found in the cytoplasm. It carries out the reaction a (3R)-hydroxyacyl-[ACP] = a (2E)-enoyl-[ACP] + H2O. Functionally, involved in unsaturated fatty acids biosynthesis. Catalyzes the dehydration of short chain beta-hydroxyacyl-ACPs and long chain saturated and unsaturated beta-hydroxyacyl-ACPs. This chain is 3-hydroxyacyl-[acyl-carrier-protein] dehydratase FabZ, found in Gluconobacter oxydans (strain 621H) (Gluconobacter suboxydans).